A 244-amino-acid polypeptide reads, in one-letter code: Type III pantothenate kinase (244 aa).

Position 9 to 16 (9 to 16 (DAGNSSLK)) interacts with ATP. Substrate-binding positions include Tyr-90 and 97–100 (GVDR). Asp-99 (proton acceptor) is an active-site residue. An ATP-binding site is contributed by Thr-122. Thr-172 lines the substrate pocket.

Belongs to the type III pantothenate kinase family. In terms of assembly, homodimer. Requires NH4(+) as cofactor. K(+) is required as a cofactor.

The protein localises to the cytoplasm. The catalysed reaction is (R)-pantothenate + ATP = (R)-4'-phosphopantothenate + ADP + H(+). Its pathway is cofactor biosynthesis; coenzyme A biosynthesis; CoA from (R)-pantothenate: step 1/5. Catalyzes the phosphorylation of pantothenate (Pan), the first step in CoA biosynthesis. This chain is Type III pantothenate kinase, found in Thiobacillus denitrificans (strain ATCC 25259 / T1).